We begin with the raw amino-acid sequence, 122 residues long: Large ribosomal subunit protein uL14 (122 aa).

It belongs to the universal ribosomal protein uL14 family. Part of the 50S ribosomal subunit. Forms a cluster with proteins L3 and L19. In the 70S ribosome, L14 and L19 interact and together make contacts with the 16S rRNA in bridges B5 and B8.

Binds to 23S rRNA. Forms part of two intersubunit bridges in the 70S ribosome. This is Large ribosomal subunit protein uL14 from Alkaliphilus metalliredigens (strain QYMF).